Here is a 478-residue protein sequence, read N- to C-terminus: NADH-quinone oxidoreductase subunit N (478 aa).

13 helical membrane passes run 8–28 (LVLP…FGVW), 38–58 (ILWA…LGTG), 62–82 (AFGG…VILV), 106–126 (PILI…GDLM), 160–180 (FVLG…VYGF), 200–220 (IGLL…VSAV), 234–254 (PTPV…ALIA), 268–288 (WGQI…IAGI), 300–320 (SSIS…AAGV), 322–342 (SMLL…AFIL), 368–388 (AFAL…LGFF), 398–418 (IGAG…IGAF), and 445–465 (FAFL…MAGV).

This sequence belongs to the complex I subunit 2 family. NDH-1 is composed of 14 different subunits. Subunits NuoA, H, J, K, L, M, N constitute the membrane sector of the complex.

It localises to the cellular chromatophore membrane. The catalysed reaction is a quinone + NADH + 5 H(+)(in) = a quinol + NAD(+) + 4 H(+)(out). Its function is as follows. NDH-1 shuttles electrons from NADH, via FMN and iron-sulfur (Fe-S) centers, to quinones in the respiratory chain. The immediate electron acceptor for the enzyme in this species is believed to be ubiquinone. Couples the redox reaction to proton translocation (for every two electrons transferred, four hydrogen ions are translocated across the cytoplasmic membrane), and thus conserves the redox energy in a proton gradient. The sequence is that of NADH-quinone oxidoreductase subunit N from Rhodobacter capsulatus (Rhodopseudomonas capsulata).